The chain runs to 424 residues: Phosphomethylpyrimidine synthase (424 aa).

Substrate is bound by residues methionine 94, tyrosine 123, histidine 162, 184-186 (SRG), 225-228 (NGMR), and glutamate 264. Histidine 268 contributes to the Zn(2+) binding site. Tyrosine 291 is a substrate binding site. Histidine 332 is a Zn(2+) binding site. Positions 406, 409, and 413 each coordinate [4Fe-4S] cluster.

The protein belongs to the ThiC family. [4Fe-4S] cluster serves as cofactor.

It carries out the reaction 5-amino-1-(5-phospho-beta-D-ribosyl)imidazole + S-adenosyl-L-methionine = 4-amino-2-methyl-5-(phosphooxymethyl)pyrimidine + CO + 5'-deoxyadenosine + formate + L-methionine + 3 H(+). It participates in cofactor biosynthesis; thiamine diphosphate biosynthesis. In terms of biological role, catalyzes the synthesis of the hydroxymethylpyrimidine phosphate (HMP-P) moiety of thiamine from aminoimidazole ribotide (AIR) in a radical S-adenosyl-L-methionine (SAM)-dependent reaction. This Methanoculleus marisnigri (strain ATCC 35101 / DSM 1498 / JR1) protein is Phosphomethylpyrimidine synthase.